Here is a 147-residue protein sequence, read N- to C-terminus: Angiogenin (147 aa).

The first 24 residues, 1 to 24 (MVILLGPLLLVFMLGLGLAPLSLA), serve as a signal peptide directing secretion. The active-site Proton acceptor is His-37. TRNA contacts are provided by Arg-45 and Asp-46. 3 disulfide bridges follow: Cys-50–Cys-104, Cys-63–Cys-115, and Cys-81–Cys-130. The Nucleolar localization signal signature appears at 55–59 (KQRGL). Cys-104 and Ile-126 together coordinate tRNA. Residue His-137 is the Proton donor of the active site.

This sequence belongs to the pancreatic ribonuclease family. Homodimer. Interacts with RNH1; inhibiting ANG ribonuclease activity. Interacts with PCNA.

The protein resides in the secreted. Its subcellular location is the nucleus. It localises to the nucleolus. The protein localises to the cytoplasm. It is found in the stress granule. Its activity is regulated as follows. Has weak tRNA ribonuclease activity by itself due to partial autoinhibition by its C-terminus, which folds into a short alpha-helix that partially occludes the substrate-binding site. In absence of stress, the ribonuclease activity is inhibited by RNH1 in the cytoplasm. In response to stress, dissociates from RNH1 in the cytoplasm and associates with cytoplasmic ribosomes with vacant A-sites: ribosomes directly activate the tRNA ribonuclease activity of ANG by refolding the C-terminal alpha-helix. In response to stress, the angiogenic activity of ANG is inhibited by RNH1 in the nucleus. Its function is as follows. Secreted ribonuclease that can either promote or restrict cell proliferation of target cells, depending on the context. Endocytosed in target cells via its receptor PLXNB2 and translocates to the cytoplasm or nucleus. Under stress conditions, localizes to the cytoplasm and promotes the assembly of stress granules (SGs): specifically cleaves a subset of tRNAs within anticodon loops to produce tRNA-derived stress-induced fragments (tiRNAs), resulting in translation repression and inhibition of cell proliferation. tiRNas also prevent formation of apoptosome, thereby promoting cell survival. Preferentially cleaves RNAs between a pyrimidine and an adenosine residue, suggesting that it cleaves the anticodon loop of tRNA(Ala) (32-UUAGCAU-38) after positions 33 and 36. Cleaves a subset of tRNAs, including tRNA(Ala), tRNA(Glu), tRNA(Gly), tRNA(Lys), tRNA(Val), tRNA(His), tRNA(Asp) and tRNA(Sec). Under growth conditions and in differentiated cells, translocates to the nucleus and stimulates ribosomal RNA (rRNA) transcription, including that containing the initiation site sequences of 45S rRNA, thereby promoting cell growth and proliferation. Angiogenin induces vascularization of normal and malignant tissues via its ability to promote rRNA transcription. Involved in hematopoietic stem and progenitor cell (HSPC) growth and survival by promoting rRNA transcription in growth conditions and inhibiting translation in response to stress, respectively. Mediates the crosstalk between myeloid and intestinal epithelial cells to protect the intestinal epithelial barrier integrity: secreted by myeloid cells and promotes intestinal epithelial cells proliferation and survival. Also mediates osteoclast-endothelial cell crosstalk in growing bone: produced by osteoclasts and protects the neighboring vascular cells against senescence by promoting rRNA transcription. In Sus scrofa (Pig), this protein is Angiogenin (ANG).